We begin with the raw amino-acid sequence, 514 residues long: Cytochrome bd-II ubiquinol oxidase subunit 1 (514 aa).

Over 1–22 (MWDVIDLSRWQFALTALYHFLF) the chain is Cytoplasmic. Residue histidine 19 coordinates heme. A helical membrane pass occupies residues 23-42 (VPLTLGLIFLLAIMETIYVV). Residues 43–94 (TGKTIYRDMTRFWGKLFGINFALGVATGLTMEFQFGTNWSFYSNYVGDIFGA) are Periplasmic-facing. A helical transmembrane segment spans residues 95-114 (PLAMEALMAFFLESTFVGLF). The Cytoplasmic segment spans residues 115 to 129 (FFGWQRLNKYQHLLV). Residues 130-149 (TWLVAFGSNLSALWILNANG) traverse the membrane as a helical segment. The Periplasmic portion of the chain corresponds to 150-187 (WMQYPTGAHFDIDTLRMEMTSFSELVFNPVSQVKFVHT). Histidine 186 contacts heme. A helical membrane pass occupies residues 188–207 (VMAGYVTGAMFIMAISAWYL). The Cytoplasmic portion of the chain corresponds to 208-219 (LRGRERNVALRS). Residues 220-239 (FAIGSVFGTLAIIGTLQLGD) traverse the membrane as a helical segment. The Periplasmic portion of the chain corresponds to 240–392 (SSAYEVAQVQ…VAPVFWSFRI (153 aa)). Methionine 393 lines the heme pocket. Residues 393–412 (MVGCGSLLLLVMLIALVQTL) traverse the membrane as a helical segment. The Cytoplasmic portion of the chain corresponds to 413–470 (RGKIDQHRWVLKMALWSLPLPWIAIEAGWFMTEFGRQPWAIQDILPTYSAHSALTTGQ). The chain crosses the membrane as a helical span at residues 471–490 (LAFSLIMIVGLYTLFLIAEV). At 491-514 (YLMQKYARLGPSAMQSEQPTQQQG) the chain is on the periplasmic side.

It belongs to the cytochrome ubiquinol oxidase subunit 1 family. As to quaternary structure, heterodimer of subunits I and II. The cofactor is heme. Post-translationally, the N-terminus is blocked.

The protein resides in the cell inner membrane. It carries out the reaction 2 a ubiquinol + O2 + n H(+)(in) = 2 a ubiquinone + 2 H2O + n H(+)(out). It functions in the pathway energy metabolism; oxidative phosphorylation. With respect to regulation, inhibited by cyanide; is more sensitive to cyanide than cytochrome bd-I oxidase. In terms of biological role, a terminal oxidase that catalyzes quinol-dependent, Na(+)-independent oxygen uptake. Prefers menadiol over other quinols although ubiquinol was not tested. Generates a proton motive force using protons and electrons from opposite sides of the membrane to generate H(2)O, transferring 1 proton/electron. The chain is Cytochrome bd-II ubiquinol oxidase subunit 1 (appC) from Escherichia coli (strain K12).